We begin with the raw amino-acid sequence, 568 residues long: 2-succinyl-5-enolpyruvyl-6-hydroxy-3-cyclohexene-1-carboxylate synthase (568 aa).

This sequence belongs to the TPP enzyme family. MenD subfamily. Homodimer. The cofactor is Mg(2+). Requires Mn(2+) as cofactor. Thiamine diphosphate is required as a cofactor.

It catalyses the reaction isochorismate + 2-oxoglutarate + H(+) = 5-enolpyruvoyl-6-hydroxy-2-succinyl-cyclohex-3-ene-1-carboxylate + CO2. It participates in quinol/quinone metabolism; 1,4-dihydroxy-2-naphthoate biosynthesis; 1,4-dihydroxy-2-naphthoate from chorismate: step 2/7. It functions in the pathway quinol/quinone metabolism; menaquinone biosynthesis. Its function is as follows. Catalyzes the thiamine diphosphate-dependent decarboxylation of 2-oxoglutarate and the subsequent addition of the resulting succinic semialdehyde-thiamine pyrophosphate anion to isochorismate to yield 2-succinyl-5-enolpyruvyl-6-hydroxy-3-cyclohexene-1-carboxylate (SEPHCHC). The protein is 2-succinyl-5-enolpyruvyl-6-hydroxy-3-cyclohexene-1-carboxylate synthase of Actinobacillus pleuropneumoniae serotype 5b (strain L20).